The sequence spans 376 residues: N-acetyldiaminopimelate deacetylase (376 aa).

Asp-69 is a catalytic residue. Glu-128 serves as the catalytic Proton acceptor.

It belongs to the peptidase M20A family. N-acetyldiaminopimelate deacetylase subfamily.

It carries out the reaction N-acetyl-(2S,6S)-2,6-diaminopimelate + H2O = (2S,6S)-2,6-diaminopimelate + acetate. It participates in amino-acid biosynthesis; L-lysine biosynthesis via DAP pathway; LL-2,6-diaminopimelate from (S)-tetrahydrodipicolinate (acetylase route): step 3/3. Its function is as follows. Catalyzes the conversion of N-acetyl-diaminopimelate to diaminopimelate and acetate. The protein is N-acetyldiaminopimelate deacetylase of Bacillus thuringiensis subsp. konkukian (strain 97-27).